The primary structure comprises 327 residues: Probable cell division protein WhiA (327 aa).

Residues 275-308 constitute a DNA-binding region (H-T-H motif); sequence SLEELGRLADPPMTKDAVAGRIRRLLSMADRKAK. The disordered stretch occupies residues 304–327; sequence DRKAKQDGIPDTESAVTPDLLEDA.

This sequence belongs to the WhiA family.

Functionally, involved in cell division and chromosome segregation. The chain is Probable cell division protein WhiA from Mycolicibacterium gilvum (strain PYR-GCK) (Mycobacterium gilvum (strain PYR-GCK)).